Reading from the N-terminus, the 431-residue chain is Glycerol-3-phosphate dehydrogenase [NAD(P)+] (431 aa).

Residues 1–19 are compositionally biased toward polar residues; it reads MTSANDKSTDTNVDSTQAE. Positions 1–25 are disordered; that stretch reads MTSANDKSTDTNVDSTQAEQKMAEK. Residues Ser79, Phe80, Arg100, and Lys173 each coordinate NADPH. Residues Lys173 and Gly201 each coordinate sn-glycerol 3-phosphate. An NADPH-binding site is contributed by Ala205. Sn-glycerol 3-phosphate-binding residues include Lys256, Asp309, Ser319, Arg320, and Asn321. Lys256 (proton acceptor) is an active-site residue. Arg320 is an NADPH binding site. Glu346 is a binding site for NADPH.

It belongs to the NAD-dependent glycerol-3-phosphate dehydrogenase family.

The protein resides in the cytoplasm. It catalyses the reaction sn-glycerol 3-phosphate + NAD(+) = dihydroxyacetone phosphate + NADH + H(+). It carries out the reaction sn-glycerol 3-phosphate + NADP(+) = dihydroxyacetone phosphate + NADPH + H(+). It functions in the pathway membrane lipid metabolism; glycerophospholipid metabolism. Functionally, catalyzes the reduction of the glycolytic intermediate dihydroxyacetone phosphate (DHAP) to sn-glycerol 3-phosphate (G3P), the key precursor for phospholipid synthesis. The sequence is that of Glycerol-3-phosphate dehydrogenase [NAD(P)+] from Psychrobacter arcticus (strain DSM 17307 / VKM B-2377 / 273-4).